Reading from the N-terminus, the 158-residue chain is Putative zinc-binding protein ORF9 (158 aa).

The segment at 72–111 (CPVCGRAVVGPTVREACGHVTCNACETEACAVDRLCIGGG) adopts an RING-type; degenerate zinc-finger fold. The interval 126 to 158 (GPRWRGPRPTRPEAHEAVQRSRGSSEDACTCAP) is disordered. A compositionally biased stretch (basic and acidic residues) spans 135–150 (TRPEAHEAVQRSRGSS).

In Ictalurid herpesvirus 1 (strain Auburn) (IcHV-1), this protein is Putative zinc-binding protein ORF9 (ORF9).